A 76-amino-acid polypeptide reads, in one-letter code: UPF0235 protein MMAR_2910 (76 aa).

This sequence belongs to the UPF0235 family.

In Mycobacterium marinum (strain ATCC BAA-535 / M), this protein is UPF0235 protein MMAR_2910.